A 627-amino-acid chain; its full sequence is Zinc finger protein 256 (627 aa).

A KRAB domain is found at 14–96 (VTFEDVAVYF…QKTNPCEICG (83 aa)). The tract at residues 55 to 76 (GSGAGDEEAPYQQSTSPQRVSQ) is disordered. Over residues 65–75 (YQQSTSPQRVS) the composition is skewed to polar residues. C2H2-type zinc fingers lie at residues 90–112 (NPCEICGPVLRQILHLVEHQGTH), 239–261 (YMCSECGKSFSTSCSLSDHLRVH), 267–289 (YTCGECGKSYRQSSSLITHRRIH), 295–317 (HQCDECGKLFNRKYDLLIHQRVH), 323–345 (YKCSECGKSFSHSSSLITHQRIH), 351–373 (YECSECGKSFIHSSSLITHQRVH), 379–401 (YMCSECGKSFSQSCHLIKHRRLH), 407–429 (YECSECGKLFTYRSRFFQHQRVH), 435–457 (HECHECGKLFSRKFDLIVHERVH), 463–485 (YECSECGKSFTCKSYLISHWKVH), 491–513 (YECGECGKSFTHSSTLLQHQRVH), 519–541 (YECNECGKFFSQSSSLIRHRRSH), 547–569 (YECSECWKSFSNHSSLVKHRRVH), 575–597 (YECSECGKSFSQSSNLTNHQRIH), and 603–625 (YECSDCGKFFTFNSNLLKHQNVH).

It belongs to the krueppel C2H2-type zinc-finger protein family. Interacts with TRIM28.

Its subcellular location is the nucleus. Its function is as follows. Transcriptional repressor that plays a role in cell proliferation. Requires TRIM28 for its activity. This chain is Zinc finger protein 256 (ZNF256), found in Homo sapiens (Human).